We begin with the raw amino-acid sequence, 371 residues long: Probable G protein-coupled receptor 85 (371 aa).

At 1–26 (MANYSHAGDHNILQNVSPLATFLKLT) the chain is on the extracellular side. Asn3 carries an N-linked (GlcNAc...) asparagine glycan. A helical membrane pass occupies residues 27 to 47 (SLGFIIGVGVVGNLLISILLV). Topologically, residues 48-58 (KDKSLHRAPYY) are cytoplasmic. A helical membrane pass occupies residues 59 to 79 (FLLDLCASDILRSAICFPFVF). Topologically, residues 80-96 (TSVKNGSAWTYGTLTCK) are extracellular. An N-linked (GlcNAc...) asparagine glycan is attached at Asn84. An intrachain disulfide couples Cys95 to Cys173. The helical transmembrane segment at 97-117 (VIAFLGVLSCFHTAFMLFCVS) threads the bilayer. Residues 118 to 138 (VTRYLAIAHHRFYTKRLTFWT) lie on the Cytoplasmic side of the membrane. A helical membrane pass occupies residues 139 to 159 (CLAVICMVWTLSVAMAFPPVL). The Extracellular segment spans residues 160–189 (DVGTYSFIREEDQCTFQHRSFRANDSLGFM). N-linked (GlcNAc...) asparagine glycosylation occurs at Asn183. The helical transmembrane segment at 190–210 (LLLALILLATQLVYLKLIFFV) threads the bilayer. Residues 211–287 (HDRRKMKPVQ…FKTEKRISRM (77 aa)) lie on the Cytoplasmic side of the membrane. Residues 288 to 308 (FYIITFFFLSLWGPYLVACYW) traverse the membrane as a helical segment. Residues 309-321 (RVFARGPVIPGGY) are Extracellular-facing. A helical membrane pass occupies residues 322-342 (LTAAVWMSFAQAGVNPFICIF). Residues 343-371 (SNRELRRCFSTTLLYCRKSRLPREPYCVI) lie on the Cytoplasmic side of the membrane.

Belongs to the G-protein coupled receptor 1 family.

It localises to the cell membrane. Its function is as follows. Orphan receptor. The protein is Probable G protein-coupled receptor 85 (gpr85) of Danio rerio (Zebrafish).